The sequence spans 399 residues: MEANAGSTLAPVNYSDDNVAKPLENQPVNFYSLTLEDLKAYIKSKGKEQFRAQQIFKWVYEQRVTDPEQMTNLSKEFRQDLPSMLSFDLPPVLQHLKSVDGTQKFLFDMKDGMSVEAVVIPSEDRLTLCISSEVGCNMACKFCFTGKQKLKRRLRTEDIVGQFMQVHDRLAEGQRITNIVFMGMGEPLDNPEAVFKTIDVIHSPWGINLSRKKITVSTSGIVPEMWRVADAKVRLAVSLNGPNDEIRSQVMPINKRWDTKALLEACKEHYRVSKDKITFEYVLLKGITDQLEHARQLVKLVKDVPCKINIIPFNEHPGSGYERPDDDTIQAFHTELMNLGAHVLLRRSMGRDIFAACGQLTTVKERPQTMDISNSRLAGLPKYKRELLAAQEAEQNNQH.

Glutamate 116 acts as the Proton acceptor in catalysis. The 231-residue stretch at 122–352 folds into the Radical SAM core domain; the sequence is SEDRLTLCIS…VLLRRSMGRD (231 aa). A disulfide bridge connects residues cysteine 129 and cysteine 357. The [4Fe-4S] cluster site is built by cysteine 136, cysteine 140, and cysteine 143. S-adenosyl-L-methionine is bound by residues 185–186, serine 217, 238–240, and asparagine 314; these read GE and SLN. The active-site S-methylcysteine intermediate is the cysteine 357.

Belongs to the radical SAM superfamily. RlmN family. Requires [4Fe-4S] cluster as cofactor.

Its subcellular location is the cytoplasm. The enzyme catalyses adenosine(2503) in 23S rRNA + 2 reduced [2Fe-2S]-[ferredoxin] + 2 S-adenosyl-L-methionine = 2-methyladenosine(2503) in 23S rRNA + 5'-deoxyadenosine + L-methionine + 2 oxidized [2Fe-2S]-[ferredoxin] + S-adenosyl-L-homocysteine. It carries out the reaction adenosine(37) in tRNA + 2 reduced [2Fe-2S]-[ferredoxin] + 2 S-adenosyl-L-methionine = 2-methyladenosine(37) in tRNA + 5'-deoxyadenosine + L-methionine + 2 oxidized [2Fe-2S]-[ferredoxin] + S-adenosyl-L-homocysteine. Its function is as follows. Specifically methylates position 2 of adenine 2503 in 23S rRNA and position 2 of adenine 37 in tRNAs. m2A2503 modification seems to play a crucial role in the proofreading step occurring at the peptidyl transferase center and thus would serve to optimize ribosomal fidelity. The sequence is that of Dual-specificity RNA methyltransferase RlmN from Bdellovibrio bacteriovorus (strain ATCC 15356 / DSM 50701 / NCIMB 9529 / HD100).